Here is a 524-residue protein sequence, read N- to C-terminus: MSSGYKPGKKRKVQPVQPIKKELVDFYGCQIPKEYEPYLQRTNVSLIIKKGFINGMKNDAEMFCNDDLFELLMNELLNEQPGASFSSCVRQTANVATLPGVIKSLAMPDAHSGYGFSIGGVAAMRLDDPNAVICPGGVGFDINCGVRLLRTNLDDKDIEPHLVELADALQKNIPSGVGTTSNQTLTEKEMNEIMNEGLEWLVKKDLAWKEDLVYCEENGRIINSDPHLVSQKARGRGRNQLGTLGSGNHYLEIQRVDEIMDMEAAKQMGISHIGQICIMIHCGSRGLGHQVCQDFVDLCVNQSNKNEVDIQLTGVPFQSDNGQKYFKAMNAAANYAFANRGMISYHVRCTFEQVFKKSPKDLDMHLVYDVCHNIAKEEIHLIDGNEIKCIVHRKGATRAFAPLNPVIPDAYKPIGQPAIIGGSMGTCSYMLVGTQEGMKKTFGSTCHGAGRKISRVKAMKDISSNSVVEEMKKKGIELRITDPKLAAEEADGAYKDVKEVVETCQSAGISKIVFKLKPLIVVKG.

Residues D141, C144, H249, H281, and H372 each contribute to the Mn(2+) site. 248–252 lines the GMP pocket; it reads NHYLE. Residues 372–373, 421–424, S428, 447–450, and K523 contribute to the GMP site; these read HN, GGSM, and HGAG. H447 functions as the GMP-histidine intermediate in the catalytic mechanism.

The protein belongs to the RtcB family. Catalytic component of the tRNA-splicing ligase complex. Mn(2+) is required as a cofactor.

It catalyses the reaction a 3'-end 3'-phospho-ribonucleotide-RNA + a 5'-end dephospho-ribonucleoside-RNA + GTP = a ribonucleotidyl-ribonucleotide-RNA + GMP + diphosphate. The enzyme catalyses a 3'-end 2',3'-cyclophospho-ribonucleotide-RNA + a 5'-end dephospho-ribonucleoside-RNA + GTP + H2O = a ribonucleotidyl-ribonucleotide-RNA + GMP + diphosphate + H(+). In terms of biological role, catalytic subunit of the tRNA-splicing ligase complex that acts by directly joining spliced tRNA halves to mature-sized tRNAs by incorporating the precursor-derived splice junction phosphate into the mature tRNA as a canonical 3',5'-phosphodiester. May act as an RNA ligase with broad substrate specificity, and may function toward other RNAs. This chain is RNA-splicing ligase RtcB homolog 2, found in Entamoeba dispar (strain ATCC PRA-260 / SAW760).